We begin with the raw amino-acid sequence, 468 residues long: MPDRPVRTRIAPSPTGMMHIGTARTALFNWLYARHTGGKFLLRIEDTDRERSTDEAVKVIFDGLKWLGLDADEPPVFQFARADRHREAAETLLARGGAYRDYMTPEELEAEREVARAEGRVVRSPWRDASPNDAPDRPFVVRLKAPQEGETVIQDAVKGEVRFQNKQLDDLILLRTDGTPTYNLAVVVDDHDMGVTHVIRGDDHLNNAARQTLIYQGLGWEVPVWAHLPLIHGPDGAKLSKRHGAQAVSEFDSMGYLPETMRNYLAKLGWGHGDDEIFSDEQAIAWFDINDVVSAPARLDWAKLNHLNNHYIRQAEPARLAELVKTVLASRDWPLEAGDMAVIERTIPFVRDGAKTTLELADNVVFALKRRPLELPEKTRTQMTEELRGRLSRLREALAAVEYWDVPSLEAALRAFAEAEGVGLGKFGPQLRAVLSGGAPAPDLAGAMVALTRDESLGRLDDALSPSA.

The 'HIGH' region signature appears at 12–22; the sequence is PSPTGMMHIGT. The 'KMSKS' region signature appears at 238–242; that stretch reads KLSKR. Residue K241 participates in ATP binding.

This sequence belongs to the class-I aminoacyl-tRNA synthetase family. Glutamate--tRNA ligase type 1 subfamily. Monomer.

The protein resides in the cytoplasm. It catalyses the reaction tRNA(Glu) + L-glutamate + ATP = L-glutamyl-tRNA(Glu) + AMP + diphosphate. Its function is as follows. Catalyzes the attachment of glutamate to tRNA(Glu) in a two-step reaction: glutamate is first activated by ATP to form Glu-AMP and then transferred to the acceptor end of tRNA(Glu). In Phenylobacterium zucineum (strain HLK1), this protein is Glutamate--tRNA ligase.